The primary structure comprises 206 residues: Uridine kinase (206 aa).

11-18 (GGTGSGKS) is a binding site for ATP.

Belongs to the uridine kinase family.

It localises to the cytoplasm. It carries out the reaction uridine + ATP = UMP + ADP + H(+). It catalyses the reaction cytidine + ATP = CMP + ADP + H(+). It participates in pyrimidine metabolism; CTP biosynthesis via salvage pathway; CTP from cytidine: step 1/3. It functions in the pathway pyrimidine metabolism; UMP biosynthesis via salvage pathway; UMP from uridine: step 1/1. In Clostridium botulinum (strain Kyoto / Type A2), this protein is Uridine kinase.